A 234-amino-acid chain; its full sequence is Glycerol uptake facilitator protein (234 aa).

The next 6 membrane-spanning stretches (helical) occupy residues 9–29 (FLGT…VVLP), 37–57 (GWIV…FVSG), 61–81 (PAYL…LPWA), 83–103 (VLPY…LVWL), 135–155 (LISE…LGLY), and 159–179 (AGIG…SLGG). The NPA 1 signature appears at 65–67 (NPA). The NPA 2 signature appears at 186–188 (NPA). Residues 214–234 (WIPVVGPVIGAALAVLVFSLF) traverse the membrane as a helical segment.

It belongs to the MIP/aquaporin (TC 1.A.8) family.

The protein localises to the cell membrane. It catalyses the reaction glycerol(in) = glycerol(out). Mediates glycerol diffusion across the cytoplasmic membrane via a pore-type mechanism. The polypeptide is Glycerol uptake facilitator protein (glpF) (Streptococcus pneumoniae serotype 4 (strain ATCC BAA-334 / TIGR4)).